We begin with the raw amino-acid sequence, 149 residues long: Deoxyuridine 5'-triphosphate nucleotidohydrolase (149 aa).

Residues 68-70 (RSG), Asn81, 85-87 (LID), and Met95 each bind substrate.

The protein belongs to the dUTPase family. Requires Mg(2+) as cofactor.

It carries out the reaction dUTP + H2O = dUMP + diphosphate + H(+). Its pathway is pyrimidine metabolism; dUMP biosynthesis; dUMP from dCTP (dUTP route): step 2/2. Functionally, this enzyme is involved in nucleotide metabolism: it produces dUMP, the immediate precursor of thymidine nucleotides and it decreases the intracellular concentration of dUTP so that uracil cannot be incorporated into DNA. The protein is Deoxyuridine 5'-triphosphate nucleotidohydrolase of Bordetella bronchiseptica (strain ATCC BAA-588 / NCTC 13252 / RB50) (Alcaligenes bronchisepticus).